We begin with the raw amino-acid sequence, 132 residues long: Small ribosomal subunit protein uS8 (132 aa).

It belongs to the universal ribosomal protein uS8 family. In terms of assembly, part of the 30S ribosomal subunit. Contacts proteins S5 and S12.

In terms of biological role, one of the primary rRNA binding proteins, it binds directly to 16S rRNA central domain where it helps coordinate assembly of the platform of the 30S subunit. The polypeptide is Small ribosomal subunit protein uS8 (Streptococcus mutans serotype c (strain ATCC 700610 / UA159)).